A 235-amino-acid polypeptide reads, in one-letter code: 2,3-bisphosphoglycerate-dependent phosphoglycerate mutase (235 aa).

Substrate is bound by residues 8-15 (RHGESIWN), 21-22 (TG), Arg58, 110-113 (ERYY), Lys121, 137-138 (RR), and 181-182 (GN). Residue His9 is the Tele-phosphohistidine intermediate of the active site. Glu110 serves as the catalytic Proton donor/acceptor.

Belongs to the phosphoglycerate mutase family. BPG-dependent PGAM subfamily.

It carries out the reaction (2R)-2-phosphoglycerate = (2R)-3-phosphoglycerate. Its pathway is carbohydrate degradation; glycolysis; pyruvate from D-glyceraldehyde 3-phosphate: step 3/5. Its function is as follows. Catalyzes the interconversion of 2-phosphoglycerate and 3-phosphoglycerate. This Methanococcus vannielii (strain ATCC 35089 / DSM 1224 / JCM 13029 / OCM 148 / SB) protein is 2,3-bisphosphoglycerate-dependent phosphoglycerate mutase.